Consider the following 257-residue polypeptide: THAP domain-containing protein 10 (257 aa).

The segment at 1-90 adopts a THAP-type zinc-finger fold; the sequence is MPARCVAAHC…LVAGAVPTLH (90 aa). Residues 154 to 168 show a composition bias toward polar residues; sequence QPHADNPSNTVTSVP. Residues 154-178 form a disordered region; it reads QPHADNPSNTVTSVPTHCEEGPVHK.

In Homo sapiens (Human), this protein is THAP domain-containing protein 10 (THAP10).